The chain runs to 290 residues: Release factor glutamine methyltransferase (290 aa).

The S-adenosyl-L-methionine site is built by Asp140 and Asn181. 181–184 contacts substrate; the sequence is NPPY.

Belongs to the protein N5-glutamine methyltransferase family. PrmC subfamily.

It catalyses the reaction L-glutaminyl-[peptide chain release factor] + S-adenosyl-L-methionine = N(5)-methyl-L-glutaminyl-[peptide chain release factor] + S-adenosyl-L-homocysteine + H(+). In terms of biological role, methylates the class 1 translation termination release factors RF1/PrfA and RF2/PrfB on the glutamine residue of the universally conserved GGQ motif. This is Release factor glutamine methyltransferase from Chlamydia trachomatis serovar D (strain ATCC VR-885 / DSM 19411 / UW-3/Cx).